Reading from the N-terminus, the 372-residue chain is Aminomethyltransferase (372 aa).

This sequence belongs to the GcvT family. In terms of assembly, the glycine cleavage system is composed of four proteins: P, T, L and H.

The enzyme catalyses N(6)-[(R)-S(8)-aminomethyldihydrolipoyl]-L-lysyl-[protein] + (6S)-5,6,7,8-tetrahydrofolate = N(6)-[(R)-dihydrolipoyl]-L-lysyl-[protein] + (6R)-5,10-methylene-5,6,7,8-tetrahydrofolate + NH4(+). The glycine cleavage system catalyzes the degradation of glycine. In Streptomyces coelicolor (strain ATCC BAA-471 / A3(2) / M145), this protein is Aminomethyltransferase.